Here is a 556-residue protein sequence, read N- to C-terminus: Formate--tetrahydrofolate ligase (556 aa).

Position 65–72 (65–72 (TPAGEGKS)) interacts with ATP.

Belongs to the formate--tetrahydrofolate ligase family.

It carries out the reaction (6S)-5,6,7,8-tetrahydrofolate + formate + ATP = (6R)-10-formyltetrahydrofolate + ADP + phosphate. The protein operates within one-carbon metabolism; tetrahydrofolate interconversion. This is Formate--tetrahydrofolate ligase from Clostridium beijerinckii (strain ATCC 51743 / NCIMB 8052) (Clostridium acetobutylicum).